Reading from the N-terminus, the 174-residue chain is Adipose-secreted signaling protein (174 aa).

This sequence belongs to the ADISSP family.

It is found in the secreted. In terms of biological role, may be involved in thermogenesis and glucose homeostasis. The polypeptide is Adipose-secreted signaling protein (Xenopus tropicalis (Western clawed frog)).